Here is a 1161-residue protein sequence, read N- to C-terminus: Perforin-like protein 1 (1161 aa).

A helical membrane pass occupies residues Leu-67–Val-86. Residues Pro-154–Phe-329 are disordered. Basic and acidic residues-rich tracts occupy residues Thr-162–Glu-177 and Ala-184–Ser-194. Over residues Pro-201–Asp-211 the composition is skewed to acidic residues. Polar residues predominate over residues Asn-222–Asp-234. Low complexity predominate over residues Gly-238–Ser-249. N-linked (GlcNAc...) asparagine glycosylation is present at Asn-257. The span at Asn-264–Lys-283 shows a compositional bias: basic residues. Over residues Asn-309–Asp-322 the composition is skewed to polar residues. N-linked (GlcNAc...) asparagine glycosylation is present at Asn-344. Residues Ala-353–Ser-381 are disordered. Residues Ser-361 to Pro-378 are compositionally biased toward polar residues. One can recognise an MACPF domain in the interval Leu-463–Thr-817. An intrachain disulfide couples Cys-539 to Cys-602. Residue Asn-550 is glycosylated (N-linked (GlcNAc...) asparagine). The beta stranded transmembrane segment at Tyr-554–Ser-589 threads the bilayer. N-linked (GlcNAc...) asparagine glycosylation occurs at Asn-618. The cysteines at positions 643 and 657 are disulfide-linked. Residues Arg-694–Asn-740 form a beta stranded membrane-spanning segment. The tract at residues Gly-716 to Glu-736 is disordered. A glycan (N-linked (GlcNAc...) asparagine) is linked at Asn-755. Cystine bridges form between Cys-845–Cys-900, Cys-874–Cys-881, Cys-928–Cys-981, Cys-957–Cys-964, Cys-1019–Cys-1080, and Cys-1047–Cys-1054. Asn-1022, Asn-1050, and Asn-1111 each carry an N-linked (GlcNAc...) asparagine glycan. A disordered region spans residues Val-1094 to Ser-1149. Basic residues predominate over residues Gly-1099 to Asn-1111.

It belongs to the MPEG1 family. Homooligomer; forms a homooligomeric pore.

The protein localises to the parasitophorous vacuole membrane. The protein resides in the cytoplasmic vesicle. It is found in the secretory vesicle. It localises to the microneme membrane. Functionally, pore-forming protein that promotes parasite exit from host cells: mediates formation of a pore in the parasitophorous vacuolar membrane, leading to membrane permeabilization, thereby facilitating parasite egress from host cells. May also form a pore in the host plasma membrane. Preferentially binds inner leaflet lipids, such as phosphatidylethanolamine (PE) or phosphatidylserine (PS). The polypeptide is Perforin-like protein 1 (Toxoplasma gondii (strain ATCC 50861 / VEG)).